A 321-amino-acid chain; its full sequence is Peroxidase 5 (321 aa).

Residues 1 to 24 form the signal peptide; sequence MERFSLRFVLMMVSIILTSSICQA. Q25 carries the post-translational modification Pyrrolidone carboxylic acid. 4 disulfides stabilise this stretch: C35-C115, C68-C73, C121-C317, and C201-C227. H66 (proton acceptor) is an active-site residue. The Ca(2+) site is built by D67, V70, G72, D74, and S76. P164 contributes to the substrate binding site. H194 contacts heme b. T195 contacts Ca(2+). N-linked (GlcNAc...) asparagine glycosylation occurs at N211. 3 residues coordinate Ca(2+): D240, T243, and D248. N-linked (GlcNAc...) asparagine glycosylation occurs at N285.

The protein belongs to the peroxidase family. Classical plant (class III) peroxidase subfamily. Requires heme b as cofactor. Ca(2+) serves as cofactor.

The protein localises to the secreted. It carries out the reaction 2 a phenolic donor + H2O2 = 2 a phenolic radical donor + 2 H2O. In terms of biological role, removal of H(2)O(2), oxidation of toxic reductants, biosynthesis and degradation of lignin, suberization, auxin catabolism, response to environmental stresses such as wounding, pathogen attack and oxidative stress. These functions might be dependent on each isozyme/isoform in each plant tissue. The sequence is that of Peroxidase 5 (PER5) from Arabidopsis thaliana (Mouse-ear cress).